The following is a 444-amino-acid chain: Abhydrolase domain-containing protein abhd-5.2 (444 aa).

The AB hydrolase-1 domain occupies 162 to 409 (PIVLIHGFGA…SAGHHVYADD (248 aa)).

Belongs to the peptidase S33 family. ABHD4/ABHD5 subfamily. As to quaternary structure, interacts with atgl-1; the interaction tethers atgl-1 to lipid droplets. In terms of tissue distribution, expressed in the hypodermis and intestine.

Its subcellular location is the lipid droplet. Its function is as follows. Acts coordinately with phospholipase atgl-1 within the lipolytic cascade to distribute stored energy to tissues to maintain energy levels during the dauer phase. Localizes atgl-1 to lipid droplets, possibly to facilitate triglyceride hydrolysis. Regulates lipid droplet size, lipid content, the exchange of lipids between lipid droplets and fusion of lipid droplets during the dauer phase. The protein is Abhydrolase domain-containing protein abhd-5.2 of Caenorhabditis elegans.